A 257-amino-acid polypeptide reads, in one-letter code: Beta-fibrinogenase (257 aa).

The signal sequence occupies residues 1-18 (MVLIRVLANLLLLQLSHA). The propeptide occupies 19 to 24 (QKSSEL). The 224-residue stretch at 25-248 (VVGGDECNIN…YTDWIQSIIA (224 aa)) folds into the Peptidase S1 domain. Cystine bridges form between Cys31-Cys162, Cys49-Cys65, Cys97-Cys255, Cys141-Cys209, Cys173-Cys188, and Cys199-Cys224. N-linked (GlcNAc...) asparagine glycosylation occurs at Asn44. His64 serves as the catalytic Charge relay system. 2 N-linked (GlcNAc...) asparagine glycosylation sites follow: Asn78 and Asn102. Catalysis depends on Asp109, which acts as the Charge relay system. N-linked (GlcNAc...) asparagine glycans are attached at residues Asn153 and Asn169. Ser203 functions as the Charge relay system in the catalytic mechanism. Asn250 carries N-linked (GlcNAc...) asparagine glycosylation.

As to quaternary structure, monomer. Glycosylated. Contains 23.0% of hexoses, 8.3% of hexosamines and 1.0% of sialic acids. In terms of tissue distribution, expressed by the venom gland.

Its subcellular location is the secreted. With respect to regulation, inhibited by diisopropylfluorophosphate (DFP) and PMSF. In terms of biological role, snake venom serine protease that has fibrinogenolytic activities by hydrolyzing the beta chain of fibrinogen (FGB). Typical arginine esterase which hydrolyzes esters and amides of arginine. The polypeptide is Beta-fibrinogenase (Macrovipera lebetinus (Levantine viper)).